Here is a 232-residue protein sequence, read N- to C-terminus: Putative N-acetylmannosamine-6-phosphate 2-epimerase (232 aa).

Belongs to the NanE family.

It catalyses the reaction an N-acyl-D-glucosamine 6-phosphate = an N-acyl-D-mannosamine 6-phosphate. The protein operates within amino-sugar metabolism; N-acetylneuraminate degradation; D-fructose 6-phosphate from N-acetylneuraminate: step 3/5. Its function is as follows. Converts N-acetylmannosamine-6-phosphate (ManNAc-6-P) to N-acetylglucosamine-6-phosphate (GlcNAc-6-P). The sequence is that of Putative N-acetylmannosamine-6-phosphate 2-epimerase from Borrelia garinii subsp. bavariensis (strain ATCC BAA-2496 / DSM 23469 / PBi) (Borreliella bavariensis).